A 141-amino-acid polypeptide reads, in one-letter code: Small ribosomal subunit protein eS12 (141 aa).

This sequence belongs to the eukaryotic ribosomal protein eS12 family. As to quaternary structure, component of the small ribosomal subunit. Mature ribosomes consist of a small (40S) and a large (60S) subunit. The 40S subunit contains about 32 different proteins and 1 molecule of RNA (18S). The 60S subunit contains about 42 different proteins and 3 molecules of RNA (28S, 5.8S and 5S).

It localises to the cytoplasm. Its function is as follows. Component of the ribosome, a large ribonucleoprotein complex responsible for the synthesis of proteins in the cell. The small ribosomal subunit (SSU) binds messenger RNAs (mRNAs) and translates the encoded message by selecting cognate aminoacyl-transfer RNA (tRNA) molecules. The large subunit (LSU) contains the ribosomal catalytic site termed the peptidyl transferase center (PTC), which catalyzes the formation of peptide bonds, thereby polymerizing the amino acids delivered by tRNAs into a polypeptide chain. The nascent polypeptides leave the ribosome through a tunnel in the LSU and interact with protein factors that function in enzymatic processing, targeting, and the membrane insertion of nascent chains at the exit of the ribosomal tunnel. The chain is Small ribosomal subunit protein eS12 from Plasmodium falciparum (isolate 3D7).